The primary structure comprises 129 residues: Natriuretic peptides B (129 aa).

Residues 1-26 (MDPQTALSRALLLLLFLHLSLLGCRS) form the signal peptide. A disulfide bond links C107 and C123.

This sequence belongs to the natriuretic peptide family. Post-translationally, the precursor molecule is proteolytically cleaved, possibly by FURIN or CORIN, to produce the active peptide. May undergo further proteolytic cleavage by various proteases such as DPP4, MME and possibly FAP, to give rise to a variety of shorter peptides. May be cleaved at Pro-99 by the prolyl endopeptidase FAP (seprase) activity (in vitro). May be degraded by IDE. During IDE degradation, the resulting products initially increase the activation of NPR1 and can also stimulate NPR2 to produce cGMP before the fragments are completely degraded and inactivated by IDE (in vitro).

It is found in the secreted. In terms of biological role, cardiac hormone that plays a key role in mediating cardio-renal homeostasis. May also function as a paracrine antifibrotic factor in the heart. Acts by specifically binding and stimulating NPR1 to produce cGMP, which in turn activates effector proteins that drive various biological responses. Involved in regulating the extracellular fluid volume and maintaining the fluid-electrolyte balance through natriuresis, diuresis, vasorelaxation, and inhibition of renin and aldosterone secretion. Binds the clearance receptor NPR3. The protein is Natriuretic peptides B (NPPB) of Bos taurus (Bovine).